A 730-amino-acid polypeptide reads, in one-letter code: Arginine decarboxylase 1B, chloroplastic (730 aa).

A chloroplast-targeting transit peptide spans 1 to 37 (MPALGCCVDAAVSPPPGYSFLWDSSLPAPEIFPSGVP). Lysine 157 carries the N6-(pyridoxal phosphate)lysine modification. Pyridoxal 5'-phosphate is bound by residues serine 309, glycine 346, and 395 to 398 (ESGR). 460–461 (YA) contributes to the substrate binding site. Cysteine 548 serves as the catalytic Proton donor; shared with dimeric partner. Aspartate 549 is a substrate binding site. Residue tyrosine 590 participates in pyridoxal 5'-phosphate binding.

Belongs to the Orn/Lys/Arg decarboxylase class-II family. SpeA subfamily. Mg(2+) serves as cofactor. It depends on pyridoxal 5'-phosphate as a cofactor.

The protein resides in the plastid. Its subcellular location is the chloroplast. It catalyses the reaction L-arginine + H(+) = agmatine + CO2. Its pathway is alkaloid biosynthesis; nicotine biosynthesis. It functions in the pathway amine and polyamine biosynthesis; agmatine biosynthesis; agmatine from L-arginine: step 1/1. Functionally, involved in the biosynthesis of pyridine alkaloid natural products, leading mainly to the production of anabasine, anatabine, nicotine and nornicotine, effective deterrents against herbivores with antiparasitic and pesticide properties (neurotoxins); nornicotine serves as the precursor in the synthesis of the carcinogen compound N'-nitrosonornicotine (NNN). Required for the biosynthesis of putrescine. Catalyzes the first step of polyamine (PA) biosynthesis to produce putrescine from arginine. The sequence is that of Arginine decarboxylase 1B, chloroplastic from Nicotiana tabacum (Common tobacco).